A 602-amino-acid chain; its full sequence is Elongation factor 4 (602 aa).

Positions 2–184 (NHIRNFSIIA…LIVAKVPAPR (183 aa)) constitute a tr-type G domain. GTP is bound by residues 14–19 (DHGKST) and 131–134 (NKMD).

Belongs to the TRAFAC class translation factor GTPase superfamily. Classic translation factor GTPase family. LepA subfamily.

The protein resides in the cell inner membrane. It carries out the reaction GTP + H2O = GDP + phosphate + H(+). Its function is as follows. Required for accurate and efficient protein synthesis under certain stress conditions. May act as a fidelity factor of the translation reaction, by catalyzing a one-codon backward translocation of tRNAs on improperly translocated ribosomes. Back-translocation proceeds from a post-translocation (POST) complex to a pre-translocation (PRE) complex, thus giving elongation factor G a second chance to translocate the tRNAs correctly. Binds to ribosomes in a GTP-dependent manner. The sequence is that of Elongation factor 4 from Paracidovorax citrulli (strain AAC00-1) (Acidovorax citrulli).